A 160-amino-acid chain; its full sequence is Protein P5 (160 aa).

Residues 7–23 traverse the membrane as a helical segment; the sequence is FLATAAALGVAMFPTQI.

The protein resides in the virion membrane. The chain is Protein P5 (V) from Pseudoalteromonas espejiana (Bacteriophage PM2).